The chain runs to 239 residues: Peptidyl-tRNA hydrolase (239 aa).

Y14 contributes to the tRNA binding site. The active-site Proton acceptor is H19. The tRNA site is built by F64, N66, and N112.

Belongs to the PTH family. Monomer.

The protein resides in the cytoplasm. The catalysed reaction is an N-acyl-L-alpha-aminoacyl-tRNA + H2O = an N-acyl-L-amino acid + a tRNA + H(+). Its function is as follows. Hydrolyzes ribosome-free peptidyl-tRNAs (with 1 or more amino acids incorporated), which drop off the ribosome during protein synthesis, or as a result of ribosome stalling. Functionally, catalyzes the release of premature peptidyl moieties from peptidyl-tRNA molecules trapped in stalled 50S ribosomal subunits, and thus maintains levels of free tRNAs and 50S ribosomes. The protein is Peptidyl-tRNA hydrolase of Rhizobium meliloti (strain 1021) (Ensifer meliloti).